We begin with the raw amino-acid sequence, 155 residues long: MSIIDNRKATHDYFIEDRYEAGMVLEGWEVKAIRDGRVHLKESYVIVRDGEIYLLGMHVSPLPTASTHIRPDATRTRKLLLKAEEIRKLIGKVEQRGYTLVPLNLHYKNGRIKLDFALGRGKKLYDKRDTAREKDWQREKERVLKHDTRVNQRDS.

Belongs to the SmpB family.

It is found in the cytoplasm. Functionally, required for rescue of stalled ribosomes mediated by trans-translation. Binds to transfer-messenger RNA (tmRNA), required for stable association of tmRNA with ribosomes. tmRNA and SmpB together mimic tRNA shape, replacing the anticodon stem-loop with SmpB. tmRNA is encoded by the ssrA gene; the 2 termini fold to resemble tRNA(Ala) and it encodes a 'tag peptide', a short internal open reading frame. During trans-translation Ala-aminoacylated tmRNA acts like a tRNA, entering the A-site of stalled ribosomes, displacing the stalled mRNA. The ribosome then switches to translate the ORF on the tmRNA; the nascent peptide is terminated with the 'tag peptide' encoded by the tmRNA and targeted for degradation. The ribosome is freed to recommence translation, which seems to be the essential function of trans-translation. This is SsrA-binding protein from Bordetella parapertussis (strain 12822 / ATCC BAA-587 / NCTC 13253).